A 2386-amino-acid polypeptide reads, in one-letter code: MSQHAKRKAGSLDLSPRGLDDRQAFGQLLKEVLALDKEHELGRSNSLPSMTSELVEVLIEVGLLAFKHDDSKSEFISPKMLKEAHLSLQALMLILKRSPTVLREIKSSVTLLDWILPRTISLFADIRFIKLFDSLKEFHKLIYQLISEKSFLWDLYASFMRYWKYYITNVSSIVLQITNATFPYKMPSPNSQPLQSITPNYPTHREDKFDLLIINIEEACTFFFESAHFFAQCSYLKKSNFPSPPLFTAWTWIKPCFFNFVILLKRISIGDSQLFLHLHSRIVQTLCCFSLNFIYHGLPICEKSKHILMSSINLTLGSLKKTYTVANTAISLFFLSLFVLPKTVAGLFYPFGVSLLSDFKVLEQLEPDSDLKKAIILFKCRYQSSEIDQTTLRAFGEICTGKLENTLFSNSELNLFLLHYLSLDNDLSNILKVDFQNGHNICTFAKWCINNNLDEPSNLKHFREMLDYYSSHNVTISEDDLKNFSLVLCTHVAKVNEKTNSIFRTYEVHGCEVCNSFCLLFDERSLFKIPYHELFCALLKNPDIISSSVKQSLLLDGFFRWSQHCSNFNKESMLSLREFIMKALASTSRCLRVVAAKVLPIFIKGPNNLDIVEFHKESKALIFNTLKILAVENTAILETVILSWISLSRVVEEEELHFVLLEVISSVINSGIFYQGIGLSALQQIASTRHISVWQLLSPYWPTVSVAIVQGMGKKPNIASLFAQLMNISEGDFLIRTQAYTLPFLVLTKNKALIVRIAELSQSDVATLCLTNMHKILASLLTTDHPNLEESVMLLLSLATSDFEKVDLTSLLRSDPISITVELLQLYQNDVPHEKIENALRKVAMIVSQVVNDEDLSNKELLYDFFNNHILGILAEFSNILNDLKGKTSINEKIKTIVGIEKMLSLCGGAVKLGLPQILSNLQSAFQNEHLRFYAIKAWFSLILATKEPEYSSIAGLSLVILPPLFPYLEPQEAELVIQIFDFISSDTHKCLQGLKWAIPTSLDSACFSLKAKEIFCSLQNEDFYSELQSIIKCLTNENEPVCYLGLQKLELFFQAKVDELHDTLNLDISNEVLDQLLRCLLDCCVKYASTNMQISYLAAKNLGELGAIDPSRAKAQHIIKETVVLDNFENGEESLKFILDFMQSQLIPAFLVTTDTKAQGFLAYALQEFLKLGGFKSAVINKKKGLTVVTEHWMSLPDLSKRVLIPFLTSKYHLTPIPKIDIRYPIYKENVTIHTWMQLFSLKLMEYAHSQNAEKIFGICSKVVKDQEVNIPCFLLPFLVLNVILTESELEVNKVIEEFQLVINQPGPDGLNSVGQQRYTSFVDVFFKIVDYLNKWLRMRKKRNWDRRSAIARKENRYMSVEDATSRESSISKVESFLSRFPSKTLGIVSLNCGFHARALFYWEQHIRNATAPYAALESDYRVLQEIYAGIDDPDEIEAVSLNFHDYSFDQQLLLHENSGTWDSALSCYEIIIQKDPENKKAKIGLLNSMLQSGHYESLVLSLDSFIINDNHEYSKMLNLGIEASWRSLSIDSLKKCLSKSNLESFEAKLGSIFYQYLRKDSFAELTERLQPLYVDAATAIANTGAHSAYDCYDILSKLHAINDFSRIAETDGIVSDNLDIVLRRRLSQVAPYGKFKHQILSTHLVGYEKFENTKKTAEIYLEIARISRKNGQFQRAFNAILKAMDLDKPLATIEHAQWWWHQGQHRKAISELNFSLNNNMFDLVDEHEERPKNRKETLGNPLKGKVFLKLTKWLGKAGQLGLKDLETYYHKAVEIYSECENTHYYLGHHRVLMYEEEQKLPVNEQSERFLSGELVTRIINEFGRSLYYGTNHIYESMPKLLTLWLDFGAEELRLSKDDGEKYFREHIISSRKKSLELMNSNVCRLSMKIPQYFFLVALSQMISRVCHPNNKVYKILEHIIANVVASYPGETLWQLMATIKSTSQKRSLRGKSILNVLHSRKLSMSSKVDIKALSQSAILITEKLINLCNTRINSKSVKMSLKDHFRLSFDDPVDLVIPAKSFLDITLPAKDANRASHYPFPKTQPTLLKFEDEVDIMNSLQKPRKVYVRGTDGNLYPFLCKPKDDLRKDARLMEFNNLICKILRKDQEANRRNLCIRTYVVIPLNEECGFIEWVNHTRPFREILLKSYRQKNIPISYQEIKVDLDFALRSPNPGDIFEKKILPKFPPVFYEWFVESFPEPNNWVTSRQNYCRTLAVMSIVGYVLGLGDRHGENILFDEFTGEAIHVDFNCLFDKGLTFEKPEKVPFRLTHNMVDAMGPTGYEGGFRKASEITMRLLRSNQDTLMSVLESFLHDPLVEWNRKKSSSKYPNNEANEVLDIIRKKFQGFMPGETIPLSIEGQIQELIKSAVNPKNLVEMYIGWAAYF.

An FAT domain is found at 1386–1943 (TLGIVSLNCG…LWQLMATIKS (558 aa)). The 319-residue stretch at 2052–2370 (FEDEVDIMNS…QIQELIKSAV (319 aa)) folds into the PI3K/PI4K catalytic domain. Positions 2058-2064 (IMNSLQK) are G-loop. The tract at residues 2227–2235 (GLGDRHGEN) is catalytic loop. An activation loop region spans residues 2247–2271 (HVDFNCLFDKGLTFEKPEKVPFRLT). The FATC domain occupies 2354 to 2386 (IPLSIEGQIQELIKSAVNPKNLVEMYIGWAAYF).

The protein belongs to the PI3/PI4-kinase family. ATM subfamily. As to quaternary structure, interacts with crb2 (via BRCT domain). Interacts with chk1.

The protein resides in the nucleus. It catalyses the reaction L-seryl-[protein] + ATP = O-phospho-L-seryl-[protein] + ADP + H(+). The catalysed reaction is L-threonyl-[protein] + ATP = O-phospho-L-threonyl-[protein] + ADP + H(+). In terms of biological role, serine/threonine kinase which activates checkpoint signaling upon genotoxic stresses. Involved in G2 arrest following DNA damage where it phosphorylates chk1. Phosphorylation of 'Thr-73' and 'Ser-80' of checkpoint mediator crb2 promotes its interaction with chk1. It is also involved in the dependence of mitosis on the completion of DNA replication. The chain is Protein kinase rad3 (rad3) from Schizosaccharomyces pombe (strain 972 / ATCC 24843) (Fission yeast).